The following is a 226-amino-acid chain: Leucyl/phenylalanyl-tRNA--protein transferase (226 aa).

It belongs to the L/F-transferase family.

The protein localises to the cytoplasm. It carries out the reaction N-terminal L-lysyl-[protein] + L-leucyl-tRNA(Leu) = N-terminal L-leucyl-L-lysyl-[protein] + tRNA(Leu) + H(+). It catalyses the reaction N-terminal L-arginyl-[protein] + L-leucyl-tRNA(Leu) = N-terminal L-leucyl-L-arginyl-[protein] + tRNA(Leu) + H(+). The enzyme catalyses L-phenylalanyl-tRNA(Phe) + an N-terminal L-alpha-aminoacyl-[protein] = an N-terminal L-phenylalanyl-L-alpha-aminoacyl-[protein] + tRNA(Phe). Functionally, functions in the N-end rule pathway of protein degradation where it conjugates Leu, Phe and, less efficiently, Met from aminoacyl-tRNAs to the N-termini of proteins containing an N-terminal arginine or lysine. This is Leucyl/phenylalanyl-tRNA--protein transferase from Pseudomonas putida (strain W619).